The chain runs to 69 residues: uncharacterized protein (69 aa).

Residues 1–15 (MLLYIVIIVACIISK) are Cytoplasmic-facing. A helical transmembrane segment spans residues 16 to 36 (LVPNEYWAIHLFFIIMIFMVY). Residues 37-69 (MYEKLDIHQKYQFWNYTMSGLSGHNVQITCKCY) are Extracellular-facing. Asn-51 carries N-linked (GlcNAc...) asparagine; by host glycosylation.

This sequence belongs to the asfivirus X69R family.

The protein localises to the host membrane. This is an uncharacterized protein from Ornithodoros (relapsing fever ticks).